Consider the following 81-residue polypeptide: MSHKIKIYDTCIGCTQCVRACPTDVLEMIPWQGCKAKQIASAPRTEDCVGCKRCESACPTDFLSVRVYLGSETTRSMGLAY.

2 consecutive 4Fe-4S ferredoxin-type domains span residues 2–31 (SHKI…MIPW) and 39–68 (IASA…VRVY). Residues Cys-11, Cys-14, Cys-17, Cys-21, Cys-48, Cys-51, Cys-54, and Cys-58 each contribute to the [4Fe-4S] cluster site.

In terms of assembly, the eukaryotic PSI reaction center is composed of at least 11 subunits. The cofactor is [4Fe-4S] cluster.

It is found in the plastid. The protein resides in the chloroplast thylakoid membrane. It carries out the reaction reduced [plastocyanin] + hnu + oxidized [2Fe-2S]-[ferredoxin] = oxidized [plastocyanin] + reduced [2Fe-2S]-[ferredoxin]. In terms of biological role, apoprotein for the two 4Fe-4S centers FA and FB of photosystem I (PSI); essential for photochemical activity. FB is the terminal electron acceptor of PSI, donating electrons to ferredoxin. The C-terminus interacts with PsaA/B/D and helps assemble the protein into the PSI complex. Required for binding of PsaD and PsaE to PSI. PSI is a plastocyanin-ferredoxin oxidoreductase, converting photonic excitation into a charge separation, which transfers an electron from the donor P700 chlorophyll pair to the spectroscopically characterized acceptors A0, A1, FX, FA and FB in turn. The polypeptide is Photosystem I iron-sulfur center (Chara vulgaris (Common stonewort)).